Consider the following 443-residue polypeptide: Xaa-Pro dipeptidase (443 aa).

Residues D246, D257, H339, E384, and E423 each coordinate Mn(2+).

This sequence belongs to the peptidase M24B family. Bacterial-type prolidase subfamily. It depends on Mn(2+) as a cofactor.

It carries out the reaction Xaa-L-Pro dipeptide + H2O = an L-alpha-amino acid + L-proline. Functionally, splits dipeptides with a prolyl residue in the C-terminal position. In Escherichia coli (strain SMS-3-5 / SECEC), this protein is Xaa-Pro dipeptidase.